The chain runs to 732 residues: Protein FAR1-RELATED SEQUENCE 4 (732 aa).

In terms of domain architecture, FAR1 spans 11–97; the sequence is LFYKDYAKSV…VKEHNHDLLP (87 aa). Positions 212–308 constitute an MULE domain; it reads VVSFETSYFV…CLWHVLDQLP (97 aa). An SWIM-type zinc finger spans residues 490-526; that stretch reads YLVDWDEFKSDIYCSCRSFEYKGYLCRHAIVVLQMSG. Residues 623–683 are disordered; the sequence is QEENQYGSTS…ETVGEGSQEG (61 aa). The span at 624 to 635 shows a compositional bias: polar residues; sequence EENQYGSTSTQI.

It belongs to the FHY3/FAR1 family. In terms of tissue distribution, expressed in hypocotyls, rosette and cauline leaves, inflorescences stems, flowers and siliques.

The protein localises to the nucleus. Its function is as follows. Putative transcription activator involved in regulating light control of development. The protein is Protein FAR1-RELATED SEQUENCE 4 (FRS4) of Arabidopsis thaliana (Mouse-ear cress).